Reading from the N-terminus, the 146-residue chain is D-aminoacyl-tRNA deacylase (146 aa).

A Gly-cisPro motif, important for rejection of L-amino acids motif is present at residues 137-138 (GP).

This sequence belongs to the DTD family. In terms of assembly, homodimer.

The protein resides in the cytoplasm. The enzyme catalyses glycyl-tRNA(Ala) + H2O = tRNA(Ala) + glycine + H(+). The catalysed reaction is a D-aminoacyl-tRNA + H2O = a tRNA + a D-alpha-amino acid + H(+). In terms of biological role, an aminoacyl-tRNA editing enzyme that deacylates mischarged D-aminoacyl-tRNAs. Also deacylates mischarged glycyl-tRNA(Ala), protecting cells against glycine mischarging by AlaRS. Acts via tRNA-based rather than protein-based catalysis; rejects L-amino acids rather than detecting D-amino acids in the active site. By recycling D-aminoacyl-tRNA to D-amino acids and free tRNA molecules, this enzyme counteracts the toxicity associated with the formation of D-aminoacyl-tRNA entities in vivo and helps enforce protein L-homochirality. The polypeptide is D-aminoacyl-tRNA deacylase (Thermodesulfovibrio yellowstonii (strain ATCC 51303 / DSM 11347 / YP87)).